Consider the following 243-residue polypeptide: Orotidine 5'-phosphate decarboxylase (243 aa).

Residues Asp19, Lys41, Asp69–Thr78, Thr124, Arg185, Gln194, Gly214, and Arg215 contribute to the substrate site. The active-site Proton donor is Lys71.

It belongs to the OMP decarboxylase family. Type 1 subfamily. In terms of assembly, homodimer.

The catalysed reaction is orotidine 5'-phosphate + H(+) = UMP + CO2. Its pathway is pyrimidine metabolism; UMP biosynthesis via de novo pathway; UMP from orotate: step 2/2. Its function is as follows. Catalyzes the decarboxylation of orotidine 5'-monophosphate (OMP) to uridine 5'-monophosphate (UMP). In Xanthomonas axonopodis pv. citri (strain 306), this protein is Orotidine 5'-phosphate decarboxylase.